The following is a 294-amino-acid chain: Antiviral protein alpha (294 aa).

An N-terminal signal peptide occupies residues 1-24; sequence MKMMVVVVVMMLSWLILKPPSTWA. 2 disulfide bridges follow: C58–C282 and C108–C130. The active site involves E199. A propeptide spanning residues 286 to 294 is cleaved from the precursor; it reads YQSAMFPHL.

This sequence belongs to the ribosome-inactivating protein family. Type 1 RIP subfamily. As to quaternary structure, monomer.

It is found in the secreted. Its subcellular location is the cell wall. The catalysed reaction is Endohydrolysis of the N-glycosidic bond at one specific adenosine on the 28S rRNA.. In terms of biological role, inhibits viral infection of plants, and protein synthesis in vitro. Has also been shown to inhibit the replication of mammalian viruses. The protein may provide a means of cellular suicide upon invasion by a virus. The chain is Antiviral protein alpha from Phytolacca americana (American pokeweed).